We begin with the raw amino-acid sequence, 303 residues long: Diaminopimelate epimerase (303 aa).

Residues N15, Q47, and N67 each contribute to the substrate site. C76 acts as the Proton donor in catalysis. Substrate is bound by residues G77–N78, N163, N197, and E215–R216. C224 acts as the Proton acceptor in catalysis. G225–S226 is a substrate binding site. The interval F278–A303 is disordered.

It belongs to the diaminopimelate epimerase family. As to quaternary structure, homodimer.

It localises to the cytoplasm. The enzyme catalyses (2S,6S)-2,6-diaminopimelate = meso-2,6-diaminopimelate. It participates in amino-acid biosynthesis; L-lysine biosynthesis via DAP pathway; DL-2,6-diaminopimelate from LL-2,6-diaminopimelate: step 1/1. Catalyzes the stereoinversion of LL-2,6-diaminopimelate (L,L-DAP) to meso-diaminopimelate (meso-DAP), a precursor of L-lysine and an essential component of the bacterial peptidoglycan. This is Diaminopimelate epimerase from Brucella melitensis biotype 1 (strain ATCC 23456 / CCUG 17765 / NCTC 10094 / 16M).